The primary structure comprises 211 residues: Outer-membrane lipoprotein carrier protein (211 aa).

An N-terminal signal peptide occupies residues Met1 to Ala24.

The protein belongs to the LolA family. Monomer.

Its subcellular location is the periplasm. Functionally, participates in the translocation of lipoproteins from the inner membrane to the outer membrane. Only forms a complex with a lipoprotein if the residue after the N-terminal Cys is not an aspartate (The Asp acts as a targeting signal to indicate that the lipoprotein should stay in the inner membrane). The polypeptide is Outer-membrane lipoprotein carrier protein (Coxiella burnetii (strain CbuK_Q154) (Coxiella burnetii (strain Q154))).